Here is a 188-residue protein sequence, read N- to C-terminus: uncharacterized protein (188 aa).

This is an uncharacterized protein from Haemophilus influenzae (strain ATCC 51907 / DSM 11121 / KW20 / Rd).